The chain runs to 1131 residues: Activity-dependent neuroprotector homeobox protein 2 (1131 aa).

The C2H2-type 1 zinc finger occupies 73 to 96 (YCCGLCKYSTKVLTSFKNHLHRYH). The C2H2-type 2; degenerate zinc-finger motif lies at 106-128 (IPCPNCVFASQPKVVGRHFRMFH). Residues Lys118 and Lys146 each participate in a glycyl lysine isopeptide (Lys-Gly) (interchain with G-Cter in SUMO2) cross-link. The C2H2-type 3; degenerate zinc-finger motif lies at 155 to 178 (FTCLKCNFSNTLYYSMKKHVLVAH). A C2H2-type 4 zinc finger spans residues 215-240 (YYCKKCNANASSQDALMYHILTSDIH). The span at 274-285 (LAAPANGSAPSA) shows a compositional bias: low complexity. Residues 274 to 329 (LAAPANGSAPSAPAQPPCFHLALPQNSPSPAAGQPVTVAQGAPGSLTHSPPAAGQS) are disordered. A C2H2-type 5; degenerate zinc finger spans residues 694–716 (KTCPVCNELFPSNVYQVHMEVAH). A C2H2-type 6; degenerate zinc finger spans residues 747-768 (VRCLSCKCLVSEEELIHHLLMH). 2 C2H2-type zinc fingers span residues 770-793 (LGCLFCPCTFHDIKGLSEHSRNRH) and 875-898 (STCPFCFGPFVTTEAYELHLKERH). Residues 913-937 (FKCIHCCGVYTGNMTLAAIAVHLVR) form a C2H2-type 9; degenerate zinc finger. Glycyl lysine isopeptide (Lys-Gly) (interchain with G-Cter in SUMO2) cross-links involve residues Lys979 and Lys1018. Residue Ser1024 is modified to Phosphoserine. Lys1032 participates in a covalent cross-link: Glycyl lysine isopeptide (Lys-Gly) (interchain with G-Cter in SUMO1); alternate. Residue Lys1032 forms a Glycyl lysine isopeptide (Lys-Gly) (interchain with G-Cter in SUMO2); alternate linkage. Residues 1043–1102 (PKKYEGRSYEEKKQFLKDYFHKKPYPSKKEIELLSSLFWVWKIDVASFFGKRRYICMKAI) constitute a DNA-binding region (homeobox).

The protein belongs to the krueppel C2H2-type zinc-finger protein family. As to quaternary structure, may interact with SMARCA4/BRG1.

Its subcellular location is the nucleus. Functionally, may be involved in transcriptional regulation. May play a role in neuronal function; perhaps involved in protection of brain tissues from oxidative stress. May be involved in erythroid differentiation. The sequence is that of Activity-dependent neuroprotector homeobox protein 2 (ADNP2) from Homo sapiens (Human).